A 338-amino-acid polypeptide reads, in one-letter code: tRNA N6-adenosine threonylcarbamoyltransferase (338 aa).

Fe cation is bound by residues His111 and His115. Substrate contacts are provided by residues Leu134–Gly138, Asp167, Gly180, and Asn272. Asp300 serves as a coordination point for Fe cation.

This sequence belongs to the KAE1 / TsaD family. Fe(2+) serves as cofactor.

It localises to the cytoplasm. It carries out the reaction L-threonylcarbamoyladenylate + adenosine(37) in tRNA = N(6)-L-threonylcarbamoyladenosine(37) in tRNA + AMP + H(+). Functionally, required for the formation of a threonylcarbamoyl group on adenosine at position 37 (t(6)A37) in tRNAs that read codons beginning with adenine. Is involved in the transfer of the threonylcarbamoyl moiety of threonylcarbamoyl-AMP (TC-AMP) to the N6 group of A37, together with TsaE and TsaB. TsaD likely plays a direct catalytic role in this reaction. The polypeptide is tRNA N6-adenosine threonylcarbamoyltransferase (Shewanella pealeana (strain ATCC 700345 / ANG-SQ1)).